The chain runs to 350 residues: Zinc finger protein 367 (350 aa).

The disordered stretch occupies residues 104–151 (SGLRGRGAPPPAASASAAASGGEDEEEASSPDSGHLKDGIRRGRPRAD). Basic and acidic residues predominate over residues 137 to 151 (GHLKDGIRRGRPRAD). 2 C2H2-type zinc fingers span residues 167–189 (IRCN…KRTH) and 195–219 (YLCD…QRLH). Residues 290–327 (KGKLVQKADQEQQDPLEYLQSDEEDDEKRGAQRRLQEQ) form a disordered region. The stretch at 308 to 342 (LQSDEEDDEKRGAQRRLQEQRERLHGALALIELAN) forms a coiled coil. The residue at position 310 (serine 310) is a Phosphoserine. Residues 316–327 (EKRGAQRRLQEQ) show a composition bias toward basic and acidic residues.

It belongs to the krueppel C2H2-type zinc-finger protein family.

Its subcellular location is the nucleus. Its function is as follows. Transcriptional activator. Isoform 1 may be involved in transcriptional activation of erythroid genes. This Homo sapiens (Human) protein is Zinc finger protein 367 (ZNF367).